The chain runs to 949 residues: Coiled-coil domain-containing protein 66 (949 aa).

2 positions are modified to phosphothreonine: T115 and T121. S369 carries the post-translational modification Phosphoserine. Positions 474 to 558 form a coiled coil; sequence QVEEKCRKKQ…EQRIRELAQK (85 aa). A mediates localization to cilia, centrosomes and spindle microtubules and the interaction with PCM1, CEP290, CEP104 and CSPP1 region spans residues 570–949; that stretch reads GVDTIQIEYN…NQEENFGSSF (380 aa). Residue S606 is modified to Phosphoserine. Disordered stretches follow at residues 691-714 and 789-809; these read QTKHMKKYPKRPDWNINKPPKRYI and SFSKERSPSSPVPAVKNRTQQ.

As to quaternary structure, homodimer; disulfide-linked. Interacts with CEP290. Interacts with PCM1. Interacts with ARMC9, TOGARAM1, CSPP1 and CEP104. Interacts with CDK5RAP2, CEP152, CEP192, TBG1 and PRC1.

The protein resides in the cytoplasm. It is found in the cytoskeleton. Its subcellular location is the microtubule organizing center. The protein localises to the centrosome. It localises to the centriolar satellite. The protein resides in the cell projection. It is found in the cilium. Its subcellular location is the cilium basal body. The protein localises to the cilium axoneme. It localises to the photoreceptor inner segment. The protein resides in the photoreceptor outer segment. Functionally, microtubule-binding protein required for ciliogenesis. May function in ciliogenesis by mediating the transport of proteins like BBS4 to the cilium, but also through the organization of the centriolar satellites. Required for the assembly of signaling-competent cilia with proper structure and length. Mediates this function in part by regulating transition zone assembly and basal body recruitment of the IFT-B complex. Cooperates with the ciliopathy proteins CSPP1 and CEP104 during cilium length regulation. Plays two important roles during cell division. First, is required for mitotic progression via regulation of spindle assembly, organization and orientation, levels of spindle microtubules (MTs), kinetochore-fiber integrity, and chromosome alignment. Second, functions during cytokinesis in part by regulating assembly and organization of central spindle and midbody MTs Plays a role in retina morphogenesis and/or homeostasis. The sequence is that of Coiled-coil domain-containing protein 66 from Pongo abelii (Sumatran orangutan).